Consider the following 138-residue polypeptide: UPF0047 protein MJ1081 (138 aa).

The protein belongs to the UPF0047 family.

In Methanocaldococcus jannaschii (strain ATCC 43067 / DSM 2661 / JAL-1 / JCM 10045 / NBRC 100440) (Methanococcus jannaschii), this protein is UPF0047 protein MJ1081.